The following is a 317-amino-acid chain: Pantothenate kinase (317 aa).

Position 99 to 106 (99 to 106) interacts with ATP; that stretch reads GSVSVGKS.

The protein belongs to the prokaryotic pantothenate kinase family.

The protein resides in the cytoplasm. The enzyme catalyses (R)-pantothenate + ATP = (R)-4'-phosphopantothenate + ADP + H(+). The protein operates within cofactor biosynthesis; coenzyme A biosynthesis; CoA from (R)-pantothenate: step 1/5. The polypeptide is Pantothenate kinase (Mannheimia succiniciproducens (strain KCTC 0769BP / MBEL55E)).